Reading from the N-terminus, the 120-residue chain is MGKRTPRELRLRRHNRIRKRVSGTPERPRLNVFRSHAHIYAQVIDDTVGHTLVAASTIEKGWSGSPELTKTQEAALVGKLIAERALQAGITKVVFDRGGYKYHGRVKALAEAAREAGLNF.

This sequence belongs to the universal ribosomal protein uL18 family. Part of the 50S ribosomal subunit; part of the 5S rRNA/L5/L18/L25 subcomplex. Contacts the 5S and 23S rRNAs.

In terms of biological role, this is one of the proteins that bind and probably mediate the attachment of the 5S RNA into the large ribosomal subunit, where it forms part of the central protuberance. This chain is Large ribosomal subunit protein uL18, found in Chloroflexus aggregans (strain MD-66 / DSM 9485).